The following is a 434-amino-acid chain: Histidinol dehydrogenase (434 aa).

NAD(+)-binding residues include Tyr130, Gln191, and Asn214. Substrate is bound by residues Ser237, Gln259, and His262. Gln259 and His262 together coordinate Zn(2+). Residues Glu327 and His328 each act as proton acceptor in the active site. His328, Asp361, Glu415, and His420 together coordinate substrate. A Zn(2+)-binding site is contributed by Asp361. His420 provides a ligand contact to Zn(2+).

It belongs to the histidinol dehydrogenase family. It depends on Zn(2+) as a cofactor.

It carries out the reaction L-histidinol + 2 NAD(+) + H2O = L-histidine + 2 NADH + 3 H(+). It participates in amino-acid biosynthesis; L-histidine biosynthesis; L-histidine from 5-phospho-alpha-D-ribose 1-diphosphate: step 9/9. In terms of biological role, catalyzes the sequential NAD-dependent oxidations of L-histidinol to L-histidinaldehyde and then to L-histidine. This Cereibacter sphaeroides (strain ATCC 17023 / DSM 158 / JCM 6121 / CCUG 31486 / LMG 2827 / NBRC 12203 / NCIMB 8253 / ATH 2.4.1.) (Rhodobacter sphaeroides) protein is Histidinol dehydrogenase.